The following is a 322-amino-acid chain: tRNA N6-adenosine threonylcarbamoyltransferase (322 aa).

H109 and H113 together coordinate Fe cation. Substrate-binding positions include 131–135, D164, G177, D181, and N277; that span reads LISGG. Position 303 (D303) interacts with Fe cation.

It belongs to the KAE1 / TsaD family. Fe(2+) serves as cofactor.

It localises to the cytoplasm. It catalyses the reaction L-threonylcarbamoyladenylate + adenosine(37) in tRNA = N(6)-L-threonylcarbamoyladenosine(37) in tRNA + AMP + H(+). In terms of biological role, required for the formation of a threonylcarbamoyl group on adenosine at position 37 (t(6)A37) in tRNAs that read codons beginning with adenine. Is involved in the transfer of the threonylcarbamoyl moiety of threonylcarbamoyl-AMP (TC-AMP) to the N6 group of A37, together with TsaE and TsaB. TsaD likely plays a direct catalytic role in this reaction. The sequence is that of tRNA N6-adenosine threonylcarbamoyltransferase from Mesomycoplasma hyopneumoniae (strain 232) (Mycoplasma hyopneumoniae).